The primary structure comprises 380 residues: Cytochrome b (380 aa).

The next 4 helical transmembrane spans lie at 33–53, 77–98, 113–133, and 178–198; these read FGSLLGICLVLQILTGLFLAM, WFIRYLHANGASMFFICLYIHV, WNVGIILLFTVMATAFMGYVL, and FFAFHFILPFIIVALVMVHLL. Heme b is bound by residues His-83 and His-97. Heme b contacts are provided by His-182 and His-196. Position 201 (His-201) interacts with a ubiquinone. A run of 4 helical transmembrane segments spans residues 226 to 246, 288 to 308, 320 to 340, and 347 to 367; these read TKDILGVLLLILFLISLVLFA, LGGVLALITSILTLTLLPYLY, LTQLCYWMLVSDIMILTWIGA, and FITIGQVASILYFTIIIILMP.

This sequence belongs to the cytochrome b family. The cytochrome bc1 complex contains 11 subunits: 3 respiratory subunits (MT-CYB, CYC1 and UQCRFS1), 2 core proteins (UQCRC1 and UQCRC2) and 6 low-molecular weight proteins (UQCRH/QCR6, UQCRB/QCR7, UQCRQ/QCR8, UQCR10/QCR9, UQCR11/QCR10 and a cleavage product of UQCRFS1). This cytochrome bc1 complex then forms a dimer. Heme b is required as a cofactor.

The protein localises to the mitochondrion inner membrane. In terms of biological role, component of the ubiquinol-cytochrome c reductase complex (complex III or cytochrome b-c1 complex) that is part of the mitochondrial respiratory chain. The b-c1 complex mediates electron transfer from ubiquinol to cytochrome c. Contributes to the generation of a proton gradient across the mitochondrial membrane that is then used for ATP synthesis. The sequence is that of Cytochrome b (MT-CYB) from Cricetomys emini (Emin's giant pouched rat).